The chain runs to 610 residues: Phosphomethylpyrimidine synthase (610 aa).

Substrate is bound by residues asparagine 216, methionine 245, tyrosine 274, histidine 310, 330-332 (SRG), 371-374 (DGLR), and glutamate 410. Histidine 414 provides a ligand contact to Zn(2+). Tyrosine 437 contacts substrate. Histidine 478 provides a ligand contact to Zn(2+). The [4Fe-4S] cluster site is built by cysteine 558, cysteine 561, and cysteine 566.

This sequence belongs to the ThiC family. As to quaternary structure, homodimer. The cofactor is [4Fe-4S] cluster.

The enzyme catalyses 5-amino-1-(5-phospho-beta-D-ribosyl)imidazole + S-adenosyl-L-methionine = 4-amino-2-methyl-5-(phosphooxymethyl)pyrimidine + CO + 5'-deoxyadenosine + formate + L-methionine + 3 H(+). It functions in the pathway cofactor biosynthesis; thiamine diphosphate biosynthesis. Catalyzes the synthesis of the hydroxymethylpyrimidine phosphate (HMP-P) moiety of thiamine from aminoimidazole ribotide (AIR) in a radical S-adenosyl-L-methionine (SAM)-dependent reaction. The chain is Phosphomethylpyrimidine synthase from Allorhizobium ampelinum (strain ATCC BAA-846 / DSM 112012 / S4) (Agrobacterium vitis (strain S4)).